Consider the following 280-residue polypeptide: Acetylglutamate kinase (280 aa).

Substrate is bound by residues 57–58 (GG), R79, and N174.

It belongs to the acetylglutamate kinase family. ArgB subfamily.

It localises to the cytoplasm. It catalyses the reaction N-acetyl-L-glutamate + ATP = N-acetyl-L-glutamyl 5-phosphate + ADP. The protein operates within amino-acid biosynthesis; L-arginine biosynthesis; N(2)-acetyl-L-ornithine from L-glutamate: step 2/4. Functionally, catalyzes the ATP-dependent phosphorylation of N-acetyl-L-glutamate. This is Acetylglutamate kinase from Helicobacter hepaticus (strain ATCC 51449 / 3B1).